A 71-amino-acid polypeptide reads, in one-letter code: UPF0435 protein SE_1565 (71 aa).

It belongs to the UPF0435 family.

This Staphylococcus epidermidis (strain ATCC 12228 / FDA PCI 1200) protein is UPF0435 protein SE_1565.